The sequence spans 206 residues: Glycerol-3-phosphate acyltransferase (206 aa).

6 consecutive transmembrane segments (helical) span residues 6–26 (IFLA…PSGF), 57–77 (KAAL…ILIA), 86–106 (FHVI…WLNW), 118–138 (VFLG…MAVL), 143–163 (IVSL…FLSL), and 165–185 (EASF…MVLW).

Belongs to the PlsY family. Probably interacts with PlsX.

It is found in the cell inner membrane. It catalyses the reaction an acyl phosphate + sn-glycerol 3-phosphate = a 1-acyl-sn-glycero-3-phosphate + phosphate. It participates in lipid metabolism; phospholipid metabolism. Functionally, catalyzes the transfer of an acyl group from acyl-phosphate (acyl-PO(4)) to glycerol-3-phosphate (G3P) to form lysophosphatidic acid (LPA). This enzyme utilizes acyl-phosphate as fatty acyl donor, but not acyl-CoA or acyl-ACP. This Prochlorococcus marinus (strain MIT 9211) protein is Glycerol-3-phosphate acyltransferase.